The following is a 214-amino-acid chain: Methyltransferase HEMK2 (214 aa).

S-adenosyl-L-methionine contacts are provided by Thr-29, Glu-51, Gly-53, Asp-77, Asp-103, Leu-104, and Asn-122. Asn-122 serves as a coordination point for a protein.

Belongs to the eukaryotic/archaeal PrmC-related family. As to quaternary structure, heterodimer; heterodimerization with TRMT112 is required for S-adenosyl-L-methionine-binding. Ubiquitinated, leading to its degradation by the proteasome. As to expression, highly expressed in undifferentiated embryonic stem cells (at protein level). Also expressed in testis and brain, weakly expressed in differentiated embryonic stem cells and kidney. Not expressed in muscle, heart, placenta, pancreas, lung and stomach.

Its subcellular location is the nucleus. The catalysed reaction is L-lysyl-[histone] + S-adenosyl-L-methionine = N(6)-methyl-L-lysyl-[histone] + S-adenosyl-L-homocysteine + H(+). The enzyme catalyses L-glutaminyl-[protein] + S-adenosyl-L-methionine = N(5)-methyl-L-glutaminyl-[protein] + S-adenosyl-L-homocysteine + H(+). It catalyses the reaction methylarsonous acid + S-adenosyl-L-methionine = dimethylarsinate + S-adenosyl-L-homocysteine + 2 H(+). Functionally, methyltransferase that can methylate proteins and, to a lower extent, arsenic. Catalytic subunit of a heterodimer with TRMT112, which monomethylates 'Lys-12' of histone H4 (H4K12me1), a modification present at the promoters of numerous genes encoding cell cycle regulators. Catalytic subunit of a heterodimer with TRMT112, which catalyzes N5-methylation of Glu residue of proteins with a Gly-Gln-Xaa-Xaa-Xaa-Arg motif. Methylates ETF1 on 'Gln-185'; ETF1 needs to be complexed to ERF3 in its GTP-bound form to be efficiently methylated. May also play a role in the modulation of arsenic-induced toxicity by mediating the conversion of monomethylarsonous acid (3+) into the less toxic dimethylarsonic acid. It however only plays a limited role in arsenic metabolism compared with AS3MT. The chain is Methyltransferase HEMK2 from Mus musculus (Mouse).